Consider the following 306-residue polypeptide: Ubiquitin-conjugating enzyme E2Q-like protein CG4502 (306 aa).

The segment at 18–77 is disordered; the sequence is HKSSNNNNNNNNNHNNNINNNNNNDKVDGATGSSPNINNNNNNNNNNNNHDGAAAPSSAG. Low complexity-rich tracts occupy residues 22 to 41 and 53 to 77; these read NNNN…NNNN and NINN…SSAG. A UBC core domain is found at 138–299; the sequence is IRTRRLMKEY…VKTHEKYGWV (162 aa). The active-site Glycyl thioester intermediate is the cysteine 234.

Belongs to the ubiquitin-conjugating enzyme family.

The catalysed reaction is S-ubiquitinyl-[E1 ubiquitin-activating enzyme]-L-cysteine + [E2 ubiquitin-conjugating enzyme]-L-cysteine = [E1 ubiquitin-activating enzyme]-L-cysteine + S-ubiquitinyl-[E2 ubiquitin-conjugating enzyme]-L-cysteine.. Its pathway is protein modification; protein ubiquitination. Functionally, catalyzes the covalent attachment of ubiquitin to other proteins. This Drosophila melanogaster (Fruit fly) protein is Ubiquitin-conjugating enzyme E2Q-like protein CG4502.